The primary structure comprises 301 residues: NTE family protein RssA (301 aa).

The PNPLA domain maps to 8 to 168; the sequence is LALGSGAARG…VNPIPISLTR (161 aa). The GXSXG signature appears at 39–43; it reads GCSIG. Catalysis depends on serine 41, which acts as the Nucleophile. Aspartate 155 acts as the Proton acceptor in catalysis. A DGA/G motif is present at residues 155-157; that stretch reads DGA.

Belongs to the NTE family.

The polypeptide is NTE family protein RssA (rssA) (Escherichia coli (strain K12)).